The following is a 138-amino-acid chain: Putative nickel-responsive regulator (138 aa).

Residues histidine 78, histidine 89, histidine 91, and cysteine 97 each coordinate Ni(2+).

The protein belongs to the transcriptional regulatory CopG/NikR family. Requires Ni(2+) as cofactor.

In terms of biological role, transcriptional regulator. This chain is Putative nickel-responsive regulator, found in Pyrococcus horikoshii (strain ATCC 700860 / DSM 12428 / JCM 9974 / NBRC 100139 / OT-3).